Consider the following 335-residue polypeptide: MSKKCAREDCGKTVYPVEELKCLDKVWHKQCFKCTVCGMTLNMKNYKGYDKRPYCDPHYPKTVASVMADTPEMRRIAENTKNQSNIKYHAEYEKMKGTKIEIADDPEMERLKKNTQVQSNVSYHGVLDQKARQEEVRPKEEISPNPTPTPISPMNHQSYSAPTQAVAANTHLIYSTEQGGAVSPTPQKSIGSIADYDPMNGQWGTAAAQPRNSEKLGYLKAQVDKGPARFCADFAGAPPPSSNSISSTSPHSTLSSPQSTISPTGKAGFAVKAIYDYAAADKDEISFLEGDIIVNCEKIDDGWMTGTVQRTLQWGMLPANYVQPHKLPTGLHRLS.

The LIM zinc-binding domain occupies 5–65; that stretch reads CAREDCGKTV…DPHYPKTVAS (61 aa). 2 Nebulin repeats span residues 66-97 and 98-132; these read VMAD…KMKG and TKIE…QKAR. Basic and acidic residues predominate over residues 128 to 142; the sequence is DQKARQEEVRPKEEI. Disordered regions lie at residues 128–151 and 233–264; these read DQKA…PTPI and DFAG…ISPT. Low complexity predominate over residues 242–260; it reads SNSISSTSPHSTLSSPQST. In terms of domain architecture, SH3 spans 266-327; that stretch reads KAGFAVKAIY…PANYVQPHKL (62 aa).

This chain is LIM and SH3 domain protein F42H10.3, found in Caenorhabditis elegans.